Consider the following 302-residue polypeptide: Ornithine carbamoyltransferase (302 aa).

Residues 53–56 (STRT), Gln-80, Arg-104, and 131–134 (HPCQ) each bind carbamoyl phosphate. L-ornithine contacts are provided by residues Asn-162, Asp-219, and 223–224 (SM). Residues 259 to 260 (CL) and Arg-287 each bind carbamoyl phosphate.

It belongs to the aspartate/ornithine carbamoyltransferase superfamily. OTCase family.

It is found in the cytoplasm. It catalyses the reaction carbamoyl phosphate + L-ornithine = L-citrulline + phosphate + H(+). The protein operates within amino-acid biosynthesis; L-arginine biosynthesis; L-arginine from L-ornithine and carbamoyl phosphate: step 1/3. Its function is as follows. Reversibly catalyzes the transfer of the carbamoyl group from carbamoyl phosphate (CP) to the N(epsilon) atom of ornithine (ORN) to produce L-citrulline. The polypeptide is Ornithine carbamoyltransferase (Hydrogenovibrio crunogenus (strain DSM 25203 / XCL-2) (Thiomicrospira crunogena)).